The chain runs to 175 residues: Putative carbonic anhydrase-like protein YbcF (175 aa).

The protein belongs to the beta-class carbonic anhydrase family.

The protein is Putative carbonic anhydrase-like protein YbcF (ybcF) of Bacillus subtilis (strain 168).